Reading from the N-terminus, the 127-residue chain is MQRTMLKSKLHRVTATHADLHYEGSCAIDEDLLEAANIKEYEQIDIWNVNNGERFTTYAIRAERGSGVISVNGSAARRAAPGDILIIATFAVYNEVELAKHEPDLIYVDTQNRIVRRGHKIPVQAAA.

Catalysis depends on S25, which acts as the Schiff-base intermediate with substrate; via pyruvic acid. S25 is subject to Pyruvic acid (Ser). Substrate is bound at residue T57. The active-site Proton donor is Y58. 73–75 (GSA) lines the substrate pocket.

The protein belongs to the PanD family. In terms of assembly, heterooctamer of four alpha and four beta subunits. Requires pyruvate as cofactor. Post-translationally, is synthesized initially as an inactive proenzyme, which is activated by self-cleavage at a specific serine bond to produce a beta-subunit with a hydroxyl group at its C-terminus and an alpha-subunit with a pyruvoyl group at its N-terminus.

Its subcellular location is the cytoplasm. The catalysed reaction is L-aspartate + H(+) = beta-alanine + CO2. The protein operates within cofactor biosynthesis; (R)-pantothenate biosynthesis; beta-alanine from L-aspartate: step 1/1. Catalyzes the pyruvoyl-dependent decarboxylation of aspartate to produce beta-alanine. The polypeptide is Aspartate 1-decarboxylase (Dechloromonas aromatica (strain RCB)).